A 176-amino-acid polypeptide reads, in one-letter code: Peroxynitrite isomerase 1 (176 aa).

The disordered stretch occupies residues 1–23; the sequence is MDENSTLSPAHSDAAASSSANTP. Residues 8–20 show a composition bias toward low complexity; that stretch reads SPAHSDAAASSSA. The GXWXGXG signature appears at 37 to 43; sequence GLWRGEG. Histidine 168 contacts heme b.

It belongs to the nitrobindin family. In terms of assembly, homodimer. The cofactor is heme b.

The catalysed reaction is peroxynitrite = nitrate. Its pathway is nitrogen metabolism. Heme-binding protein able to scavenge peroxynitrite and to protect free L-tyrosine against peroxynitrite-mediated nitration, by acting as a peroxynitrite isomerase that converts peroxynitrite to nitrate. Therefore, this protein likely plays a role in peroxynitrite sensing and in the detoxification of reactive nitrogen and oxygen species (RNS and ROS, respectively). Is able to bind nitric oxide (NO) in vitro, but may act as a sensor of peroxynitrite levels in vivo. This is Peroxynitrite isomerase 1 from Rhodococcus jostii (strain RHA1).